Reading from the N-terminus, the 240-residue chain is Phosphatidylserine decarboxylase proenzyme (240 aa).

Ser198 acts as the Schiff-base intermediate with substrate; via pyruvic acid in catalysis. Residue Ser198 is modified to Pyruvic acid (Ser); by autocatalysis.

The protein belongs to the phosphatidylserine decarboxylase family. PSD-A subfamily. As to quaternary structure, heterodimer of a large membrane-associated beta subunit and a small pyruvoyl-containing alpha subunit. Pyruvate serves as cofactor. Is synthesized initially as an inactive proenzyme. Formation of the active enzyme involves a self-maturation process in which the active site pyruvoyl group is generated from an internal serine residue via an autocatalytic post-translational modification. Two non-identical subunits are generated from the proenzyme in this reaction, and the pyruvate is formed at the N-terminus of the alpha chain, which is derived from the carboxyl end of the proenzyme. The post-translation cleavage follows an unusual pathway, termed non-hydrolytic serinolysis, in which the side chain hydroxyl group of the serine supplies its oxygen atom to form the C-terminus of the beta chain, while the remainder of the serine residue undergoes an oxidative deamination to produce ammonia and the pyruvoyl prosthetic group on the alpha chain.

The protein resides in the cell membrane. The catalysed reaction is a 1,2-diacyl-sn-glycero-3-phospho-L-serine + H(+) = a 1,2-diacyl-sn-glycero-3-phosphoethanolamine + CO2. It participates in phospholipid metabolism; phosphatidylethanolamine biosynthesis; phosphatidylethanolamine from CDP-diacylglycerol: step 2/2. Catalyzes the formation of phosphatidylethanolamine (PtdEtn) from phosphatidylserine (PtdSer). This Paramagnetospirillum magneticum (strain ATCC 700264 / AMB-1) (Magnetospirillum magneticum) protein is Phosphatidylserine decarboxylase proenzyme.